Consider the following 74-residue polypeptide: uncharacterized protein (74 aa).

Positions 1–19 are cleaved as a signal peptide; that stretch reads MNPGFDAVDQETAAAQAVA.

This is an uncharacterized protein from Mycobacterium tuberculosis (strain ATCC 25618 / H37Rv).